A 53-amino-acid chain; its full sequence is uncharacterized protein (53 aa).

Residues serine 14–serine 33 are compositionally biased toward low complexity. Positions serine 14–phenylalanine 53 are disordered.

This is an uncharacterized protein from Dictyostelium discoideum (Social amoeba).